A 148-amino-acid chain; its full sequence is Transcriptional regulator MraZ (148 aa).

2 SpoVT-AbrB domains span residues 5 to 51 and 80 to 123; these read ATSL…PLPA and AEDV…SMEA.

The protein belongs to the MraZ family. In terms of assembly, forms oligomers.

Its subcellular location is the cytoplasm. It localises to the nucleoid. This Methylobacillus flagellatus (strain ATCC 51484 / DSM 6875 / VKM B-1610 / KT) protein is Transcriptional regulator MraZ.